We begin with the raw amino-acid sequence, 321 residues long: AA9 family lytic polysaccharide monooxygenase A (321 aa).

The first 21 residues, 1-21, serve as a signal peptide directing secretion; sequence MFRAQSFLPVLALVLRVAAHG. Histidine 20 contributes to the Cu(2+) binding site. An intrachain disulfide couples cysteine 71 to cysteine 197. An N-linked (GlcNAc...) asparagine glycan is attached at asparagine 72. Position 105 (histidine 105) interacts with Cu(2+). Asparagine 157 is a glycosylation site (N-linked (GlcNAc...) asparagine). Histidine 183 and glutamine 192 together coordinate O2. Residue tyrosine 194 participates in Cu(2+) binding. Residues 278–306 form a disordered region; sequence SSSAAATQSSSAAPSSSAIGTSTASSAAA. Serine 293 is lipidated: GPI-anchor amidated serine. Residues 294–321 constitute a propeptide, removed in mature form; it reads SAIGTSTASSAAASGTAIVDANTCMNSA.

It belongs to the polysaccharide monooxygenase AA9 family. Cu(2+) is required as a cofactor.

The protein resides in the cell membrane. The enzyme catalyses [(1-&gt;4)-beta-D-glucosyl]n+m + reduced acceptor + O2 = 4-dehydro-beta-D-glucosyl-[(1-&gt;4)-beta-D-glucosyl]n-1 + [(1-&gt;4)-beta-D-glucosyl]m + acceptor + H2O.. Functionally, lytic polysaccharide monooxygenase (LPMO) that depolymerizes crystalline and amorphous polysaccharides via the oxidation of scissile alpha- or beta-(1-4)-glycosidic bonds, yielding C1 or C4 oxidation products. Catalysis by LPMOs requires the reduction of the active-site copper from Cu(II) to Cu(I) by a reducing agent and H(2)O(2) or O(2) as a cosubstrate. Has broad specificity, cleaving at any position along the beta-glucan backbone of xyloglucan, regardless of substitutions. Shows minor activity on glucomannan. This Gloeophyllum trabeum (strain ATCC 11539 / FP-39264 / Madison 617) (Brown rot fungus) protein is AA9 family lytic polysaccharide monooxygenase A.